Here is a 106-residue protein sequence, read N- to C-terminus: ATP-dependent Clp protease adapter protein ClpS (106 aa).

Belongs to the ClpS family. In terms of assembly, binds to the N-terminal domain of the chaperone ClpA.

In terms of biological role, involved in the modulation of the specificity of the ClpAP-mediated ATP-dependent protein degradation. In Yersinia pestis bv. Antiqua (strain Antiqua), this protein is ATP-dependent Clp protease adapter protein ClpS.